Reading from the N-terminus, the 127-residue chain is Large ribosomal subunit protein uL22 (127 aa).

This sequence belongs to the universal ribosomal protein uL22 family. As to quaternary structure, part of the 50S ribosomal subunit.

Functionally, this protein binds specifically to 23S rRNA; its binding is stimulated by other ribosomal proteins, e.g. L4, L17, and L20. It is important during the early stages of 50S assembly. It makes multiple contacts with different domains of the 23S rRNA in the assembled 50S subunit and ribosome. In terms of biological role, the globular domain of the protein is located near the polypeptide exit tunnel on the outside of the subunit, while an extended beta-hairpin is found that lines the wall of the exit tunnel in the center of the 70S ribosome. In Brucella suis (strain ATCC 23445 / NCTC 10510), this protein is Large ribosomal subunit protein uL22.